We begin with the raw amino-acid sequence, 97 residues long: Co-chaperonin GroES (97 aa).

The protein belongs to the GroES chaperonin family. In terms of assembly, heptamer of 7 subunits arranged in a ring. Interacts with the chaperonin GroEL.

It localises to the cytoplasm. Its function is as follows. Together with the chaperonin GroEL, plays an essential role in assisting protein folding. The GroEL-GroES system forms a nano-cage that allows encapsulation of the non-native substrate proteins and provides a physical environment optimized to promote and accelerate protein folding. GroES binds to the apical surface of the GroEL ring, thereby capping the opening of the GroEL channel. This is Co-chaperonin GroES from Photorhabdus laumondii subsp. laumondii (strain DSM 15139 / CIP 105565 / TT01) (Photorhabdus luminescens subsp. laumondii).